A 625-amino-acid chain; its full sequence is MAU2 chromatid cohesion factor homolog (625 aa).

TPR repeat units lie at residues 96 to 129, 451 to 484, and 491 to 524; these read FDTASLLAQLHLKTEQSSHAKAMLRRAVELSQNN, GGFYYVQGLHAFHKNSFHEAKRFLRETLKMANAE, and SCSLVLLSHVFLSIGNSKESMNMVTPAMQLASKI. The span at 600–611 shows a compositional bias: polar residues; that stretch reads TVPTTETSTSAL. Residues 600–625 are disordered; it reads TVPTTETSTSALQQPQQPAAQFGQFY. The segment covering 612 to 625 has biased composition (low complexity); the sequence is QQPQQPAAQFGQFY.

Belongs to the SCC4/mau-2 family. In terms of assembly, interacts with Nipped-B to form the cohesin loading complex.

Its subcellular location is the nucleus. The protein localises to the nucleoplasm. Required for association of the cohesin complex with chromatin during interphase. Plays a role in sister chromatid cohesion and normal progression through prometaphase. The sequence is that of MAU2 chromatid cohesion factor homolog from Drosophila mojavensis (Fruit fly).